A 305-amino-acid polypeptide reads, in one-letter code: Glycine--tRNA ligase alpha subunit (305 aa).

The protein belongs to the class-II aminoacyl-tRNA synthetase family. Tetramer of two alpha and two beta subunits.

It is found in the cytoplasm. The enzyme catalyses tRNA(Gly) + glycine + ATP = glycyl-tRNA(Gly) + AMP + diphosphate. The sequence is that of Glycine--tRNA ligase alpha subunit from Streptococcus thermophilus (strain CNRZ 1066).